Consider the following 182-residue polypeptide: Ribulose bisphosphate carboxylase small subunit, chloroplastic (182 aa).

A chloroplast-targeting transit peptide spans 1 to 58 (MASSMISSATVATVSRATPAQATMVAPFTGLKSTAAFPATRKSNNDITSLASNGGRVQ).

This sequence belongs to the RuBisCO small chain family. Heterohexadecamer of 8 large and 8 small subunits.

It localises to the plastid. The protein localises to the chloroplast. In terms of biological role, ruBisCO catalyzes two reactions: the carboxylation of D-ribulose 1,5-bisphosphate, the primary event in carbon dioxide fixation, as well as the oxidative fragmentation of the pentose substrate. Both reactions occur simultaneously and in competition at the same active site. Although the small subunit is not catalytic it is essential for maximal activity. This is Ribulose bisphosphate carboxylase small subunit, chloroplastic from Fagus crenata (Japanese beech).